Here is a 287-residue protein sequence, read N- to C-terminus: ATP synthase gamma chain (287 aa).

The protein belongs to the ATPase gamma chain family. In terms of assembly, F-type ATPases have 2 components, CF(1) - the catalytic core - and CF(0) - the membrane proton channel. CF(1) has five subunits: alpha(3), beta(3), gamma(1), delta(1), epsilon(1). CF(0) has three main subunits: a, b and c.

The protein localises to the cell membrane. Functionally, produces ATP from ADP in the presence of a proton gradient across the membrane. The gamma chain is believed to be important in regulating ATPase activity and the flow of protons through the CF(0) complex. This chain is ATP synthase gamma chain, found in Bacillus velezensis (strain DSM 23117 / BGSC 10A6 / LMG 26770 / FZB42) (Bacillus amyloliquefaciens subsp. plantarum).